A 1246-amino-acid polypeptide reads, in one-letter code: Stromal processing peptidase, chloroplastic (1246 aa).

Residues 1 to 136 constitute a chloroplast transit peptide; sequence MASFPSPPLA…AKIRRRHVLH (136 aa). Position 228 (H228) interacts with Zn(2+). E231 acts as the Proton acceptor in catalysis. H232 contacts Zn(2+). E302 is an active-site residue. E309 lines the Zn(2+) pocket.

It belongs to the peptidase M16 family. It depends on Zn(2+) as a cofactor.

Its subcellular location is the plastid. The protein resides in the chloroplast stroma. Cleaves presequences (transit peptides) from chloroplastic protein precursors. Initially recognizes a precursor by binding to the C-terminus of its transit peptide and then removes the transit peptide in a single endoproteolytic step. In a next step, pursues the cleavage of transit peptide to a subfragment form. In Oryza sativa subsp. japonica (Rice), this protein is Stromal processing peptidase, chloroplastic.